A 455-amino-acid chain; its full sequence is tRNA modification GTPase MnmE (455 aa).

Residues Arg24, Glu81, and Lys120 each coordinate (6S)-5-formyl-5,6,7,8-tetrahydrofolate. One can recognise a TrmE-type G domain in the interval 216–378; it reads GMTVVIAGRP…LREHLKACMG (163 aa). Asn226 lines the K(+) pocket. GTP-binding positions include 226–231, 245–251, 270–273, and 335–338; these read NAGKSS, TDIAGTT, DTAG, and NKAD. Residue Ser230 coordinates Mg(2+). Residues Thr245, Ile247, and Thr250 each contribute to the K(+) site. Thr251 is a binding site for Mg(2+). Lys455 provides a ligand contact to (6S)-5-formyl-5,6,7,8-tetrahydrofolate.

This sequence belongs to the TRAFAC class TrmE-Era-EngA-EngB-Septin-like GTPase superfamily. TrmE GTPase family. In terms of assembly, homodimer. Heterotetramer of two MnmE and two MnmG subunits. The cofactor is K(+).

It localises to the cytoplasm. Exhibits a very high intrinsic GTPase hydrolysis rate. Involved in the addition of a carboxymethylaminomethyl (cmnm) group at the wobble position (U34) of certain tRNAs, forming tRNA-cmnm(5)s(2)U34. In Ectopseudomonas mendocina (strain ymp) (Pseudomonas mendocina), this protein is tRNA modification GTPase MnmE.